The primary structure comprises 558 residues: Membrane transporter D2 (558 aa).

The segment at 1 to 28 is disordered; the sequence is MTLKKRSSAPELPTSLDEDEEEDSPQPL. The Cytoplasmic portion of the chain corresponds to 1–38; that stretch reads MTLKKRSSAPELPTSLDEDEEEDSPQPLSNTPFFSMKN. The chain crosses the membrane as a helical span at residues 39-59; the sequence is LIVATPIILTPLLYGYNLGFV. Topologically, residues 60-152 are extracellular; the sequence is GPYSTMYGYA…QVGYSSIQSG (93 aa). The chain crosses the membrane as a helical span at residues 153 to 173; the sequence is VFAGSLVIGSTMGALMGGYLT. At 174 to 179 the chain is on the cytoplasmic side; sequence KRLDYC. A helical membrane pass occupies residues 180 to 200; the sequence is KSFLFIGLLSVIGNVLTHVAT. Topologically, residues 201 to 204 are extracellular; it reads GLFH. A helical transmembrane segment spans residues 205–225; sequence YWVLFVARIVLGFPLGWQSIT. Over 226–241 the chain is Cytoplasmic; sequence SSHYTDKFAPANHAKT. A helical transmembrane segment spans residues 242-262; that stretch reads LGTLFQVSVSTGIFVTSFFGL. Residues 263–281 are Extracellular-facing; it reads VLGNTIQYDAASNANTMGR. A helical transmembrane segment spans residues 282–302; that stretch reads MQGLVSVSTLLSIFVVFLPLI. Topologically, residues 303–335 are cytoplasmic; the sequence is TKDGYSKSRRGDYEGENSEDASRKAAEEYTMTQ. Residues 336-356 traverse the membrane as a helical segment; that stretch reads MIGPILNGVAMGCVTQLTGIN. At 357 to 373 the chain is on the extracellular side; it reads ANMNFAPTIMSNLGLQP. Residues 374 to 394 form a helical membrane-spanning segment; the sequence is LVGNIIVMAWNMLATFCVIPL. The Cytoplasmic portion of the chain corresponds to 395–402; it reads SRRFSMRT. A helical transmembrane segment spans residues 403 to 423; that stretch reads LFLFCGFVGSLCCVFLGGIPV. Residues 424-441 are Extracellular-facing; that stretch reads YPGVTKSDKAISGIAITG. A helical membrane pass occupies residues 442–463; the sequence is IAIFIALYEMGVGPCFYVLAVD. At 464 to 478 the chain is on the cytoplasmic side; it reads VFPESFRPIGSSITV. Residues 479 to 499 form a helical membrane-spanning segment; the sequence is GVMFIFNLIINICYPIATEGI. At 500–512 the chain is on the extracellular side; the sequence is SGGPSGNPNKGQA. A helical transmembrane segment spans residues 513-533; the sequence is VAFIFFGCIGVVACVIEYFFL. Over 534 to 558 the chain is Cytoplasmic; it reads QPWVEPEAKMTDDLDGAAVPEGKHD.

This sequence belongs to the major facilitator superfamily. Sugar transporter (TC 2.A.1.1) family.

The protein localises to the membrane. The chain is Membrane transporter D2 from Leishmania donovani.